Reading from the N-terminus, the 121-residue chain is Fluoride-specific ion channel FluC (121 aa).

A run of 4 helical transmembrane segments spans residues 5–25 (LLIFLGGGTGSVLRYLLTISI), 33–53 (FPWGTFAVNILGCILIGVFYT), 66–83 (LMLTIGLCGGFTTFSTFS), and 98–118 (FFTYIIGSVVLGILGVMLGIW). Na(+) contacts are provided by glycine 74 and threonine 77.

It belongs to the fluoride channel Fluc/FEX (TC 1.A.43) family.

It is found in the cell inner membrane. It carries out the reaction fluoride(in) = fluoride(out). Na(+) is not transported, but it plays an essential structural role and its presence is essential for fluoride channel function. Fluoride-specific ion channel. Important for reducing fluoride concentration in the cell, thus reducing its toxicity. The polypeptide is Fluoride-specific ion channel FluC (Phocaeicola vulgatus (strain ATCC 8482 / DSM 1447 / JCM 5826 / CCUG 4940 / NBRC 14291 / NCTC 11154) (Bacteroides vulgatus)).